Here is a 260-residue protein sequence, read N- to C-terminus: 5'-nucleotidase SurE (260 aa).

A divalent metal cation is bound by residues Asp8, Asp9, Ser39, and Asn93.

This sequence belongs to the SurE nucleotidase family. It depends on a divalent metal cation as a cofactor.

It is found in the cytoplasm. The enzyme catalyses a ribonucleoside 5'-phosphate + H2O = a ribonucleoside + phosphate. Its function is as follows. Nucleotidase that shows phosphatase activity on nucleoside 5'-monophosphates. The chain is 5'-nucleotidase SurE from Thermofilum pendens (strain DSM 2475 / Hrk 5).